The following is a 529-amino-acid chain: Glucose-6-phosphate isomerase (529 aa).

E323 serves as the catalytic Proton donor. Catalysis depends on residues H352 and K456.

This sequence belongs to the GPI family.

It is found in the cytoplasm. It catalyses the reaction alpha-D-glucose 6-phosphate = beta-D-fructose 6-phosphate. It functions in the pathway carbohydrate biosynthesis; gluconeogenesis. Its pathway is carbohydrate degradation; glycolysis; D-glyceraldehyde 3-phosphate and glycerone phosphate from D-glucose: step 2/4. Functionally, catalyzes the reversible isomerization of glucose-6-phosphate to fructose-6-phosphate. The polypeptide is Glucose-6-phosphate isomerase (Geobacter sulfurreducens (strain ATCC 51573 / DSM 12127 / PCA)).